The chain runs to 419 residues: Dual specificity protein phosphatase 7 (419 aa).

Residues Met1–Ile41 form a disordered region. The span at Ser15–Glu30 shows a compositional bias: low complexity. The span at Pro31–Ile41 shows a compositional bias: gly residues. The region spanning Gly68–Glu187 is the Rhodanese domain. The segment at Cys216–Ser240 is disordered. Over residues Ser227–Ser240 the composition is skewed to polar residues. The 144-residue stretch at Phe244–Leu387 folds into the Tyrosine-protein phosphatase domain. The active-site Phosphocysteine intermediate is the Cys331. A substrate-binding site is contributed by Cys331 to Arg337.

It belongs to the protein-tyrosine phosphatase family. Non-receptor class dual specificity subfamily. As to quaternary structure, interacts with MAPK1/ERK2; the interaction enhances DUSP7 phosphatase activity.

Its subcellular location is the cytoplasm. The enzyme catalyses O-phospho-L-tyrosyl-[protein] + H2O = L-tyrosyl-[protein] + phosphate. It catalyses the reaction O-phospho-L-seryl-[protein] + H2O = L-seryl-[protein] + phosphate. The catalysed reaction is O-phospho-L-threonyl-[protein] + H2O = L-threonyl-[protein] + phosphate. Strongly inhibited by sodium orthovanadate. Its function is as follows. Dual specificity protein phosphatase. Shows high activity towards MAPK1/ERK2. Also has lower activity towards MAPK14 and MAPK8. In arrested oocytes, plays a role in meiotic resumption. Promotes nuclear envelope breakdown and activation of the CDK1/Cyclin-B complex in oocytes, probably by dephosphorylating and inactivating the conventional protein kinase C (cPKC) isozyme PRKCB. May also inactivate PRKCA and/or PRKCG. Also important in oocytes for normal chromosome alignment on the metaphase plate and progression to anaphase, where it might regulate activity of the spindle-assembly checkpoint (SAC) complex. The protein is Dual specificity protein phosphatase 7 of Rattus norvegicus (Rat).